We begin with the raw amino-acid sequence, 194 residues long: Erythropoietin (194 aa).

An N-terminal signal peptide occupies residues 1–27; it reads MGARDCTPLLLLLLSFLLFPLGLPVLG. Cystine bridges form between Cys-34-Cys-189 and Cys-56-Cys-60. N-linked (GlcNAc...) asparagine glycosylation occurs at Asn-51. N-linked (GlcNAc...) asparagine glycosylation is found at Asn-65 and Asn-110.

This sequence belongs to the EPO/TPO family. In terms of tissue distribution, produced by kidney or liver of adult mammals and by liver of fetal or neonatal mammals.

Its subcellular location is the secreted. Functionally, hormone involved in the regulation of erythrocyte proliferation and differentiation and the maintenance of a physiological level of circulating erythrocyte mass. Binds to EPOR leading to EPOR dimerization and JAK2 activation thereby activating specific downstream effectors, including STAT1 and STAT3. This is Erythropoietin (EPO) from Ovis aries (Sheep).